The primary structure comprises 491 residues: Meiosis-specific nuclear structural protein 1 (491 aa).

The tract at residues 1–314 (MATKKRALSF…QLEETLRQRD (314 aa)) is interaction with BBOF1. 2 coiled-coil regions span residues 29-253 (QVMN…RAQD) and 287-410 (RVHE…AVEK). Tyrosine 188 bears the Phosphotyrosine mark.

This sequence belongs to the MNS1 family. As to quaternary structure, able to form oligomers. Microtubule inner protein component of sperm flagellar doublet microtubules. Interacts with ODAD1. Interacts with BBOF1. As to expression, high expression in testis. Expressed in pachytene spermatocytes and post-meiotic spermatids.

Its subcellular location is the nucleus. The protein resides in the cytoplasm. It localises to the cytoskeleton. It is found in the flagellum axoneme. The protein localises to the cilium axoneme. Microtubule inner protein (MIP) part of the dynein-decorated doublet microtubules (DMTs) in cilia axoneme, which is required for motile cilia beating. May play a role in the control of meiotic division and germ cell differentiation through regulation of pairing and recombination during meiosis. Required for sperm flagella assembly. May play a role in the assembly and function of the outer dynein arm-docking complex (ODA-DC). ODA-DC mediates outer dynein arms (ODA) binding onto the axonemal doublet microtubules. The chain is Meiosis-specific nuclear structural protein 1 (Mns1) from Mus musculus (Mouse).